Here is a 260-residue protein sequence, read N- to C-terminus: MQRNGLIGDTIRSLGFLSRLPLPQGWFDNTDDSLPRNARAFPLAGGILGLLAGVALLIANAISLPPLAAALIAIGALAAMTGALHEDGLGDTADGFFGASTPDRRLDIMKDSRIGTFAALTLVIWTSVKASLLMAIIARAGAGYALLALIGTEAASRAGMLAFWHALPSARPGGLADSMGQPQWETVVCGCGLGLALLAIGFLPSGGMVALINALVLMTVVLFGFARLCMAKIGGQTGDTLGAAQQIGSLAALIGLVMAL.

7 helical membrane passes run 42-62, 64-84, 117-137, 144-164, 192-212, 214-234, and 240-260; these read PLAG…ANAI, LPPL…TGAL, FAAL…MAII, YALL…LAFW, GLGL…VALI, ALVL…AKIG, and TLGA…VMAL.

It belongs to the CobS family. Requires Mg(2+) as cofactor.

The protein resides in the cell inner membrane. The enzyme catalyses alpha-ribazole + adenosylcob(III)inamide-GDP = adenosylcob(III)alamin + GMP + H(+). It carries out the reaction alpha-ribazole 5'-phosphate + adenosylcob(III)inamide-GDP = adenosylcob(III)alamin 5'-phosphate + GMP + H(+). It functions in the pathway cofactor biosynthesis; adenosylcobalamin biosynthesis; adenosylcobalamin from cob(II)yrinate a,c-diamide: step 7/7. Its function is as follows. Joins adenosylcobinamide-GDP and alpha-ribazole to generate adenosylcobalamin (Ado-cobalamin). Also synthesizes adenosylcobalamin 5'-phosphate from adenosylcobinamide-GDP and alpha-ribazole 5'-phosphate. The sequence is that of Adenosylcobinamide-GDP ribazoletransferase from Brucella ovis (strain ATCC 25840 / 63/290 / NCTC 10512).